We begin with the raw amino-acid sequence, 561 residues long: Potassium-transporting ATPase potassium-binding subunit (561 aa).

The next 10 helical transmembrane spans lie at 4-24 (IVMQDVFFVVLLLVLAVPLGI), 65-85 (AVSVLAFSAVGFVFVMAVLML), 133-153 (IGLTVQNFVSAATGIAVLFAV), 177-197 (LYILLPLSLVLALLLVSQGVV), 253-273 (FTNLIEMLAILLIPVALVVMF), 285-305 (AIMTAMMIVFVIGVVAITISE), 380-400 (GLYGMIGFIILTVFIAGLLVG), 417-437 (MVCLLILVPPLLTLFGTAVAV), 484-504 (MVGAVMMLLARFIPLVAALYL), and 528-548 (FIGLLIGVVVLVGALSFLPAL).

This sequence belongs to the KdpA family. The system is composed of three essential subunits: KdpA, KdpB and KdpC.

The protein localises to the cell membrane. Functionally, part of the high-affinity ATP-driven potassium transport (or Kdp) system, which catalyzes the hydrolysis of ATP coupled with the electrogenic transport of potassium into the cytoplasm. This subunit binds the extracellular potassium ions and delivers the ions to the membrane domain of KdpB through an intramembrane tunnel. The polypeptide is Potassium-transporting ATPase potassium-binding subunit (Listeria monocytogenes serotype 4a (strain HCC23)).